The primary structure comprises 129 residues: uncharacterized protein (129 aa).

This is an uncharacterized protein from Acheta domesticus (House cricket).